The primary structure comprises 330 residues: DNA-directed RNA polymerase subunit alpha (330 aa).

The interval 1-231 is alpha N-terminal domain (alpha-NTD); it reads MQTNLLKPKA…EQLAVFAQLE (231 aa). The alpha C-terminal domain (alpha-CTD) stretch occupies residues 250 to 330; the sequence is FDPILLRPVD…NWPPAGLDKR (81 aa).

This sequence belongs to the RNA polymerase alpha chain family. In terms of assembly, homodimer. The RNAP catalytic core consists of 2 alpha, 1 beta, 1 beta' and 1 omega subunit. When a sigma factor is associated with the core the holoenzyme is formed, which can initiate transcription.

The enzyme catalyses RNA(n) + a ribonucleoside 5'-triphosphate = RNA(n+1) + diphosphate. Its function is as follows. DNA-dependent RNA polymerase catalyzes the transcription of DNA into RNA using the four ribonucleoside triphosphates as substrates. In Acidovorax ebreus (strain TPSY) (Diaphorobacter sp. (strain TPSY)), this protein is DNA-directed RNA polymerase subunit alpha.